We begin with the raw amino-acid sequence, 360 residues long: Alanine racemase (360 aa).

K34 acts as the Proton acceptor; specific for D-alanine in catalysis. K34 is modified (N6-(pyridoxal phosphate)lysine). R129 serves as a coordination point for substrate. Y254 functions as the Proton acceptor; specific for L-alanine in the catalytic mechanism. M302 contacts substrate.

Belongs to the alanine racemase family. It depends on pyridoxal 5'-phosphate as a cofactor.

The catalysed reaction is L-alanine = D-alanine. The protein operates within amino-acid biosynthesis; D-alanine biosynthesis; D-alanine from L-alanine: step 1/1. In terms of biological role, catalyzes the interconversion of L-alanine and D-alanine. May also act on other amino acids. This is Alanine racemase (alr) from Pectobacterium atrosepticum (strain SCRI 1043 / ATCC BAA-672) (Erwinia carotovora subsp. atroseptica).